The chain runs to 272 residues: MLSTKSVTQKYIEHHLSNLQFDLKNLTLVQSHENMSFWVLNIDSLFFSVLLCLLFLVIAGFVAKYSTVSVPGKLQAFVELIISFVDGCVKDMFHGTSKLISPLSMTVFVWIILMNSMDLIPIDLLPCIADYFFGIPTLRILPSADINITCAMALNIFALMIFYYIKTNGIIGFVSSLIYHPFNYSLCIPINFLLEIISLCSKPVSLSLRLFGNMYSGELIFILIAGFLPWWSQWMLSVPWAIFHILIIILQAFIFMVLTIIYLSESHYEYKP.

6 helical membrane passes run 42-62 (IDSL…AGFV), 108-128 (FVWI…LPCI), 140-162 (ILPS…LMIF), 177-197 (LIYH…LEII), 219-239 (LIFI…LSVP), and 241-261 (AIFH…LTII).

It belongs to the ATPase A chain family. In terms of assembly, F-type ATPases have 2 components, CF(1) - the catalytic core - and CF(0) - the membrane proton channel. CF(1) has five subunits: alpha(3), beta(3), gamma(1), delta(1), epsilon(1). CF(0) has three main subunits: a(1), b(2) and c(9-12). The alpha and beta chains form an alternating ring which encloses part of the gamma chain. CF(1) is attached to CF(0) by a central stalk formed by the gamma and epsilon chains, while a peripheral stalk is formed by the delta and b chains.

The protein localises to the cell inner membrane. In terms of biological role, key component of the proton channel; it plays a direct role in the translocation of protons across the membrane. The sequence is that of ATP synthase subunit a from Blochmanniella floridana.